A 713-amino-acid polypeptide reads, in one-letter code: Catalase-peroxidase (713 aa).

Residues 77-200 constitute a cross-link (tryptophyl-tyrosyl-methioninium (Trp-Tyr) (with M-226)); it reads WHSAGTYRTT…LGATVMGLIY (124 aa). Catalysis depends on histidine 78, which acts as the Proton acceptor. A cross-link (tryptophyl-tyrosyl-methioninium (Tyr-Met) (with W-77)) is located at residues 200–226; the sequence is YVNPEGPDGEPDLEGSAANIRESFGRM. Histidine 241 is a binding site for heme b.

The protein belongs to the peroxidase family. Peroxidase/catalase subfamily. As to quaternary structure, homodimer or homotetramer. Requires heme b as cofactor. Post-translationally, formation of the three residue Trp-Tyr-Met cross-link is important for the catalase, but not the peroxidase activity of the enzyme.

The catalysed reaction is H2O2 + AH2 = A + 2 H2O. It carries out the reaction 2 H2O2 = O2 + 2 H2O. Its function is as follows. Bifunctional enzyme with both catalase and broad-spectrum peroxidase activity. In Natronomonas pharaonis (strain ATCC 35678 / DSM 2160 / CIP 103997 / JCM 8858 / NBRC 14720 / NCIMB 2260 / Gabara) (Halobacterium pharaonis), this protein is Catalase-peroxidase.